Reading from the N-terminus, the 287-residue chain is 2-dehydro-3-deoxyphosphooctonate aldolase (287 aa).

Belongs to the KdsA family.

The protein resides in the cytoplasm. The enzyme catalyses D-arabinose 5-phosphate + phosphoenolpyruvate + H2O = 3-deoxy-alpha-D-manno-2-octulosonate-8-phosphate + phosphate. It participates in carbohydrate biosynthesis; 3-deoxy-D-manno-octulosonate biosynthesis; 3-deoxy-D-manno-octulosonate from D-ribulose 5-phosphate: step 2/3. It functions in the pathway bacterial outer membrane biogenesis; lipopolysaccharide biosynthesis. This is 2-dehydro-3-deoxyphosphooctonate aldolase from Rhodopseudomonas palustris (strain TIE-1).